A 506-amino-acid polypeptide reads, in one-letter code: Aspartic proteinase A1 (506 aa).

The signal sequence occupies residues 1 to 24 (MKIYSRTVAVSLIVSFLLCFSAFA). Positions 25-64 (ERNDGTFRVGLKKLKLDSKNRLAARVESKQEKPLRAYRLG) are cleaved as a propeptide — activation peptide. The 422-residue stretch at 82–503 (YYGEIAIGTP…DFGNEQVGFA (422 aa)) folds into the Peptidase A1 domain. The active site involves Asp100. 2 disulfide bridges follow: Cys113–Cys119 and Cys278–Cys282. The active site involves Asp287. One can recognise a Saposin B-type domain in the interval 312 to 417 (VVSQQCKTVV…NELCERLPSP (106 aa)). Intrachain disulfides connect Cys317–Cys411, Cys342–Cys383, Cys348–Cys380, and Cys425–Cys462. A glycan (N-linked (GlcNAc...) asparagine) is linked at Asn397.

It belongs to the peptidase A1 family. As to expression, expressed in roots, leaves, stems, petals, carpels, seed pods and dry seeds.

It localises to the vacuole. Its function is as follows. Involved in the breakdown of propeptides of storage proteins in protein-storage vacuoles. Possesses aspartic protease activity in vitro. The polypeptide is Aspartic proteinase A1 (APA1) (Arabidopsis thaliana (Mouse-ear cress)).